Reading from the N-terminus, the 1057-residue chain is Protein transport protein Sec16B (1057 aa).

Positions 1-15 are enriched in polar residues; that stretch reads MELWVPQTQGRTTGP. The segment at 1-86 is disordered; the sequence is MELWVPQTQG…VSGADYLKGS (86 aa). Residues 45-63 show a composition bias toward basic and acidic residues; the sequence is QDTHKNSKPQQDPRDDHQQ. Serine 70, serine 137, serine 161, and serine 185 each carry phosphoserine. Residues 185–220 form a disordered region; it reads SAFGLEQPGEFFPESGAQKQKPSLTSKSNLLQQHES. The segment covering 201 to 213 has biased composition (polar residues); sequence AQKQKPSLTSKSN. A Phosphoserine modification is found at serine 245. The central conserved domain (CCD); required for localization to endoplasmic reticulum exit sites stretch occupies residues 263–708; it reads APMRFYVPHV…KHKELEQTRT (446 aa). A compositionally biased stretch (basic and acidic residues) spans 704 to 715; it reads EQTRTGDLRDPD. Disordered stretches follow at residues 704 to 778 and 849 to 1057; these read EQTR…TYSE and AVIS…SQPC. Polar residues predominate over residues 737–764; it reads GQQNYSEDSEYSSALWPTSEQTSLTNPT. Position 856 is a phosphothreonine (threonine 856). Residues serine 866, serine 869, serine 872, and serine 881 each carry the phosphoserine modification. Positions 883–903 are enriched in basic and acidic residues; the sequence is GADKPPHPDASQKEKLRDGKN. The segment covering 906 to 926 has biased composition (low complexity); sequence SSGFGWFSWFRSKPASSVSTS. Over residues 927 to 938 the composition is skewed to acidic residues; sequence GDEDSVDSSDSE. Residues 990–999 show a composition bias toward gly residues; sequence EGVGIGGFSG. A compositionally biased stretch (polar residues) spans 1028–1043; the sequence is NPSQVPQLPTASSLNR.

Belongs to the SEC16 family. As to quaternary structure, SEC16A and SEC16B are each present in multiple copies in a heteromeric complex. Interacts with TFG. Interacts with SEC13. As to expression, liver, kidney, heart, spleen and brain.

Its subcellular location is the endoplasmic reticulum membrane. It localises to the golgi apparatus membrane. Plays a role in the organization of the endoplasmic reticulum exit sites (ERES), also known as transitional endoplasmic reticulum (tER). Required for secretory cargo traffic from the endoplasmic reticulum to the Golgi apparatus. Involved in peroxisome biogenesis. Regulates the transport of peroxisomal biogenesis factors PEX3 and PEX16 from the ER to peroxisomes. This is Protein transport protein Sec16B (Sec16b) from Rattus norvegicus (Rat).